Consider the following 1072-residue polypeptide: DNA-directed RNA polymerase subunit beta (1072 aa).

This sequence belongs to the RNA polymerase beta chain family. As to quaternary structure, in plastids the minimal PEP RNA polymerase catalytic core is composed of four subunits: alpha, beta, beta', and beta''. When a (nuclear-encoded) sigma factor is associated with the core the holoenzyme is formed, which can initiate transcription.

It localises to the plastid. The protein resides in the chloroplast. It carries out the reaction RNA(n) + a ribonucleoside 5'-triphosphate = RNA(n+1) + diphosphate. Its function is as follows. DNA-dependent RNA polymerase catalyzes the transcription of DNA into RNA using the four ribonucleoside triphosphates as substrates. This chain is DNA-directed RNA polymerase subunit beta, found in Lobularia maritima (Sweet alyssum).